A 165-amino-acid chain; its full sequence is Large ribosomal subunit protein uL10 (165 aa).

The protein belongs to the universal ribosomal protein uL10 family. Part of the ribosomal stalk of the 50S ribosomal subunit. The N-terminus interacts with L11 and the large rRNA to form the base of the stalk. The C-terminus forms an elongated spine to which L12 dimers bind in a sequential fashion forming a multimeric L10(L12)X complex.

Its function is as follows. Forms part of the ribosomal stalk, playing a central role in the interaction of the ribosome with GTP-bound translation factors. The polypeptide is Large ribosomal subunit protein uL10 (Serratia proteamaculans (strain 568)).